Here is a 121-residue protein sequence, read N- to C-terminus: Flagellar protein FliT (121 aa).

Positions 1 to 50 are required for homodimerization; sequence MNNAPHLYFAWQQLVEKSQLMLRLATEEQWDELIASEMAYVNAVQEIAHL. Residues 60 to 98 form a fliD binding region; the sequence is MQEQLRPMLRLILDNESKVKQLLQIRMDELAKLVGQSSV.

It belongs to the FliT family. As to quaternary structure, homodimer. Interacts with FliD and FlhC.

It is found in the cytoplasm. Its subcellular location is the cytosol. Its function is as follows. Dual-function protein that regulates the transcription of class 2 flagellar operons and that also acts as an export chaperone for the filament-capping protein FliD. As a transcriptional regulator, acts as an anti-FlhDC factor; it directly binds FlhC, thus inhibiting the binding of the FlhC/FlhD complex to class 2 promoters, resulting in decreased expression of class 2 flagellar operons. As a chaperone, effects FliD transition to the membrane by preventing its premature polymerization, and by directing it to the export apparatus. This chain is Flagellar protein FliT, found in Escherichia coli O9:H4 (strain HS).